Here is a 112-residue protein sequence, read N- to C-terminus: Large ribosomal subunit protein uL1 (112 aa).

It belongs to the universal ribosomal protein uL1 family.

The sequence is that of Large ribosomal subunit protein uL1 (rpl-10a) from Caenorhabditis remanei (Caenorhabditis vulgaris).